Consider the following 494-residue polypeptide: Cytochrome P450 2C44 (494 aa).

An N-terminal signal peptide occupies residues 1-25 (MELLGLPTLALLVLVMSLSLLSVWT). The residue at position 131 (S131) is a Phosphoserine. 2 positions are modified to N6-acetyllysine: K253 and K379. C439 contributes to the heme binding site.

The protein belongs to the cytochrome P450 family. Requires heme as cofactor. In terms of tissue distribution, highly expressed in liver, particularly in hepatocytes and bile duct epithelial cells (at protein level). Expressed in nephron segments. Prominent expression is detected in proximal tubules at the corticomedullary junction (at protein level). Also expressed in renal cortical collecting duct. Lower expression levels are detected in adrenal glands.

Its subcellular location is the endoplasmic reticulum membrane. The protein resides in the microsome membrane. It catalyses the reaction (5Z,8Z,11Z,14Z)-eicosatetraenoate + reduced [NADPH--hemoprotein reductase] + O2 = (8R,9S)-epoxy-(5Z,11Z,14Z)-eicosatrienoate + oxidized [NADPH--hemoprotein reductase] + H2O + H(+). It carries out the reaction (5Z,8Z,11Z,14Z)-eicosatetraenoate + reduced [NADPH--hemoprotein reductase] + O2 = (11R,12S)-epoxy-(5Z,8Z,14Z)-eicosatrienoate + oxidized [NADPH--hemoprotein reductase] + H2O + H(+). The catalysed reaction is (5Z,8Z,11Z,14Z)-eicosatetraenoate + reduced [NADPH--hemoprotein reductase] + O2 = 14,15-epoxy-(5Z,8Z,11Z)-eicosatrienoate + oxidized [NADPH--hemoprotein reductase] + H2O + H(+). The enzyme catalyses (5Z,8Z,11Z,14Z,17Z)-eicosapentaenoate + reduced [NADPH--hemoprotein reductase] + O2 = 8,9-epoxy-(5Z,11Z,14Z,17Z)-eicosatetraenoate + oxidized [NADPH--hemoprotein reductase] + H2O + H(+). It catalyses the reaction (5Z,8Z,11Z,14Z,17Z)-eicosapentaenoate + reduced [NADPH--hemoprotein reductase] + O2 = 11,12-epoxy-(5Z,8Z,14Z,17Z)-eicosatetraenoate + oxidized [NADPH--hemoprotein reductase] + H2O + H(+). It carries out the reaction (5Z,8Z,11Z,14Z,17Z)-eicosapentaenoate + reduced [NADPH--hemoprotein reductase] + O2 = 14,15-epoxy-(5Z,8Z,11Z,17Z)-eicosatetraenoate + oxidized [NADPH--hemoprotein reductase] + H2O + H(+). The catalysed reaction is (5Z,8Z,11Z,14Z,17Z)-eicosapentaenoate + reduced [NADPH--hemoprotein reductase] + O2 = (17R,18S)-epoxy-(5Z,8Z,11Z,14Z)-eicosatetraenoate + oxidized [NADPH--hemoprotein reductase] + H2O + H(+). The enzyme catalyses (5Z,8Z,11Z,14Z,17Z)-eicosapentaenoate + reduced [NADPH--hemoprotein reductase] + O2 = (17S,18R)-epoxy-(5Z,8Z,11Z,14Z)-eicosatetraenoate + oxidized [NADPH--hemoprotein reductase] + H2O + H(+). It catalyses the reaction 20-hydroxy-(5Z,8Z,11Z,14Z)-eicosatetraenoate + reduced [NADPH--hemoprotein reductase] + O2 = 20-hydroxy-8,9-epoxy-(5Z,11Z,14Z)-eicosatrienoate + oxidized [NADPH--hemoprotein reductase] + H2O + H(+). Its pathway is lipid metabolism; arachidonate metabolism. Functionally, a cytochrome P450 monooxygenase involved in polyunsaturated fatty acids (PUFAs) metabolism and signaling. Catalyzes preferentially the epoxidation of double bonds of PUFAs. Converts arachidonic acid (ARA, C20:4(n-6)) primarily to stereospecific products 8R,9S-epoxyeicosatrienoate (EET) and 11R,12S-EET. Plays a major role in the formation of EETs and hydroxy-EETs (HEETs) in kidney. Via EETs may inhibit the epithelial sodium channels (ENaCs) in nephron segments, preventing excessive sodium absorption during high dietary salt intake. Participates in the formation of anti-inflammatory hydroxyepoxyeicosatrienoic acids (HEETs) by converting 20-hydroxyeicosatetraenoic acid (20-HETE) to 20,8,9-HEET, an activator of PPARA. Metabolizes eicosapentaenoic acid (EPA, C20:5(n-3)) to epoxyeicosatetraenoic acid (EETeTr) regioisomers, 8,9-, 11,12-, 14,15-, and 17,18- EETeTr, preferentially producing 17R,18S enantiomer. Mechanistically, uses molecular oxygen inserting one oxygen atom into a substrate, and reducing the second into a water molecule, with two electrons provided by NADPH via cytochrome P450 reductase (CPR; NADPH-ferrihemoprotein reductase). The chain is Cytochrome P450 2C44 from Mus musculus (Mouse).